The following is a 250-amino-acid chain: 2-(R)-hydroxypropyl-CoM dehydrogenase (250 aa).

NAD(+) is bound by residues serine 12–asparagine 14, aspartate 33, aspartate 60–valine 61, and asparagine 87. Residue arginine 152 participates in 2-oxopropyl-coenzyme M binding. Tyrosine 155 (proton acceptor) is an active-site residue. Isoleucine 188–methionine 192 lines the NAD(+) pocket. Tryptophan 195–arginine 196 is a binding site for 2-oxopropyl-coenzyme M.

This sequence belongs to the short-chain dehydrogenases/reductases (SDR) family. In terms of assembly, homodimer in solution. Homotetramer. Component III of the aliphatic epoxide carboxylation complex together with components I, II and IV.

The catalysed reaction is (R)-2-hydroxypropyl-coenzyme M + NAD(+) = 2-oxopropyl-coenzyme M + NADH + H(+). It participates in alkene metabolism; propylene degradation. Its activity is regulated as follows. Inhibited by the arginine-specific modifiers 2,3-butanedione and phenylglyoxal. 2-(2-methyl-2-hydroxypropylthio)ethanesulfonate (M-HPC), an achiral analog of both R-HPC and S-HPC, and (2S)-2-hydroxypropyl-coenzyme M (S-HPC) are competitive inhibitors. Inhibited (at 70%) by the coenzyme M analog 2-bromoethanesulfonate (BES). Functionally, involved in aliphatic epoxide carboxylation. Catalyzes the reversible oxidation of (R)-2-hydroxypropyl-coenzyme M (R-HPC) to 2-oxopropyl-coenzyme M (2-KPC). The enzyme is highly specific for the R enantiomers. In vitro can also use achiral 2-propanol and short-chain (R)- and (S)-2-alkanols. This is 2-(R)-hydroxypropyl-CoM dehydrogenase from Xanthobacter autotrophicus (strain ATCC BAA-1158 / Py2).